A 184-amino-acid chain; its full sequence is Histone H3-like centromeric protein CSE4 (184 aa).

Positions 54–81 (YIQPERSASSQQIHPPEHHISAHERITK) are disordered. A compositionally biased stretch (basic and acidic residues) spans 68-80 (PPEHHISAHERIT). Residues 82 to 182 (ARGTRYKPTD…MQLARRIRGQ (101 aa)) form an H3-like region.

The protein belongs to the histone H3 family. Component of centromeric nucleosomes, where DNA is wrapped around a histone octamer core. The octamer contains two molecules each of H2A, H2B, CSE4/CENPA and H4 assembled in one CSE4-H4 heterotetramer and two H2A-H2B heterodimers. Interacts with the inner kinetochore. In terms of processing, ubiquitinated. Is degraded through ubiquitin-mediated proteolysis when not protected by its association to the kinetochore.

The protein resides in the nucleus. Its subcellular location is the chromosome. It is found in the centromere. In terms of biological role, histone H3-like nucleosomal protein that is specifically found in centromeric nucleosomes. Replaces conventional H3 in the nucleosome core of centromeric chromatin that serves as an assembly site for the inner kinetochore. Required for recruitment and assembly of kinetochore proteins, mitotic progression and chromosome segregation. May serve as an epigenetic mark that propagates centromere identity through replication and cell division. In Kluyveromyces lactis (strain ATCC 8585 / CBS 2359 / DSM 70799 / NBRC 1267 / NRRL Y-1140 / WM37) (Yeast), this protein is Histone H3-like centromeric protein CSE4 (CSE4).